The primary structure comprises 513 residues: ATP synthase subunit alpha (513 aa).

Position 169–176 (169–176 (GDRQIGKT)) interacts with ATP.

It belongs to the ATPase alpha/beta chains family. F-type ATPases have 2 components, CF(1) - the catalytic core - and CF(0) - the membrane proton channel. CF(1) has five subunits: alpha(3), beta(3), gamma(1), delta(1), epsilon(1). CF(0) has three main subunits: a(1), b(2) and c(9-12). The alpha and beta chains form an alternating ring which encloses part of the gamma chain. CF(1) is attached to CF(0) by a central stalk formed by the gamma and epsilon chains, while a peripheral stalk is formed by the delta and b chains.

Its subcellular location is the cell inner membrane. The catalysed reaction is ATP + H2O + 4 H(+)(in) = ADP + phosphate + 5 H(+)(out). In terms of biological role, produces ATP from ADP in the presence of a proton gradient across the membrane. The alpha chain is a regulatory subunit. The sequence is that of ATP synthase subunit alpha from Francisella tularensis subsp. tularensis (strain SCHU S4 / Schu 4).